The following is a 140-amino-acid chain: Methylglyoxal synthase (140 aa).

The 140-residue stretch at 1 to 140 folds into the MGS-like domain; that stretch reads MKIALIAHDR…HDQDSNPINL (140 aa). Substrate contacts are provided by residues His8, Lys12, 34–37, and 54–55; these read TGTT and SG. The active-site Proton donor/acceptor is Asp60. His87 is a binding site for substrate.

The protein belongs to the methylglyoxal synthase family.

It carries out the reaction dihydroxyacetone phosphate = methylglyoxal + phosphate. Functionally, catalyzes the formation of methylglyoxal from dihydroxyacetone phosphate. This chain is Methylglyoxal synthase, found in Latilactobacillus sakei subsp. sakei (strain 23K) (Lactobacillus sakei subsp. sakei).